The following is a 2109-amino-acid chain: MDALESLLDEVALEGLDGLCLPALWSRLETRVPPFPLPLEPCTQEFLWRALATHPGISFYEEPRERPDLQLQDRYEEIDLETGILESRRDPVALEDVYPIHMILENKDGIQGSCRYFKERKNITNDIRTKSLQPRCTMVEAFDRWGKKLIIVASQAMRYRALIGQEGDPDLKLPDFSYCILERLGRSRWQGELQRDLHTTAFKVDAGKLHYHRKILNKNGLITMQSHVIRLPTGAQQHSILLLLNRFHVDRRSKYDILMEKLSVMLSTRTNHIETLGKLREELGLCERTFKRLYQYMLNAGLAKVVSLRLQEIHPECGPCKTKKGTDVMVRCLKLLKEFKRNDHDDDEDEEVISKTVPPVDIVFERDMLTQTYDLIERRGTKGISQAEIRVAMNVGKLEARMLCRLLQRFKVVKGFMEDEGRQRTTKYISCVFAEESDLSRQYQREKARSELLTTVSLASMQEESLLPEGEDTFLSESDSEEERSSSKRRGRGSQKDTRASANLRPKTQPHHSTPTKGGWKVVNLHPLKKQPPSFPGAAEERACQSLASRDSLLDTSSVSEPNVSFVSHCADSNSGDIAVIEEVRMENPKESSSSLKTGRHSSGQDKPHETYRLLKRRNLIIEAVTNLRLIESLFTIQKMIMDQEKQEGVSTKCCKKSIVRLVRNLSEEGLLRLYRTTVIQDGIKKKVDLVVHPSMDQNDPLVRSAIEQVRFRISNSSTANRVKTSQPPVPQGEAEEDSQGKEGPSGSGDSQLSASSRSESGRMKKSDNKMGITPLRNYHPIVVPGLGRSLGFLPKMPRLRVVHMFLWYLIYGHPASNTVEKPSFISERRTIKQESGRAGVRPSSSGSAWEACSEAPSKGSQDGVTWEAEVELATETVYVDDASWMRYIPPIPVHRDFGFGWALVSDILLCLPLSIFIQIVQVSYKVDNLEEFLNDPLKKHTLIRFLPRPIRQQLLYKRRYIFSVVENLQRLCYMGLLQFGPTEKFQDKDQVFIFLKKNAVIVDTTICDPHYNLARSSRPFERRLYVLNSMQDVENYWFDLQCVCLNTPLGVVRCPRVRKNSSTDQGSDEEGSLQKEQESAMDKHNLERKCAMLEYTTGSREVVDEGLIPGDGLGAAGLDSSFYGHLKRNWIWTSYIINQAKKENTAAENGLTVRLQTFLSKRPMPLSARGNSRLNIWGEARVGSELCAGWEEQFEVDREPSLDRNRRVRGGKSQKRKRLKKDPGKKIKRKKKGEFPGEKSKRLRYHDEADQSALQRMTRLRVTWSMQEDGLLVLCRIASNVLNTKVKGPFVTWQVVRDILHATFEESLDKTSHSVGRRARYIVKNPQAYLNYKVCLAEVYQDKALVGDFMNRRGDYDDPKVCANEFKEFVEKLKEKFSSALRNSNLEIPDTLQELFARYRVLAIGDEKDQTRKEDELNSVDDIHFLVLQNLIQSTLALSDSQMKSYQSFQTFRLYREYKDHVLVKAFMECQKRSLVNRRRVNHTLGPKKNRALPFVPMSYQLSQTYYRIFTWRFPSTICTESFQFLDRMRAAGKLDQPDRFSFKDQDNNEPTNDMVAFSLDGPGGNCVAVLTLFSLGLISVDVRIPEQIIVVDSSMVENEVIKSLGKDGSLEDDEDEEDDLDEGVGGKRRSMEVKPAQASHTNYLLMRGYYSPGIVSTRNLNPNDSIVVNSCQMKFQLRCTPVPARLRPAAAPLEELTMGTSCLPDTFTKLINPQENTCSLEEFVLQLELSGYSPEDLTAALEILEAIIATGCFGIDKEELRRRFSALEKAGGGRTRTFADCIQALLEQHQVLEVGGNTARLVAMGSAWPWLLHSVRLKDREDADIQREDPQARPLEGSSSEDSPPEGQAPPSHSPRGTKRRASWASENGETDAEGTQMTPAKRPALQDSNLAPSLGPGAEDGAEAQAPSPPPALEDTAAAGAAQEDQEGVGEFSSPGQEQLSGQAQPPEGSEDPRGFTESFGAANISQAARERDCESVCFIGRPWRVVDGHLNLPVCKGMMEAMLYHIMTRPGIPESSLLRHYQGVLQPVAVLELLQGLESLGCIRKRWLRKPRPVSLFSTPVVEEVEVPSSLDESPMAFYEPTLDCTLRLGRVFPHEVNWNKWIHL.

Residues 467–521 form a disordered region; it reads LPEGEDTFLSESDSEEERSSSKRRGRGSQKDTRASANLRPKTQPHHSTPTKGGWK. The span at 469-482 shows a compositional bias: acidic residues; that stretch reads EGEDTFLSESDSEE. K529 is covalently cross-linked (Glycyl lysine isopeptide (Lys-Gly) (interchain with G-Cter in SUMO2)). Residues 586 to 609 form a disordered region; the sequence is MENPKESSSSLKTGRHSSGQDKPH. S667 is modified (phosphoserine). Residues 718–727 are compositionally biased toward polar residues; it reads STANRVKTSQ. Residues 718–775 are disordered; it reads STANRVKTSQPPVPQGEAEEDSQGKEGPSGSGDSQLSASSRSESGRMKKSDNKMGITP. S739 carries the phosphoserine modification. Residues 748 to 759 show a composition bias toward low complexity; the sequence is SGDSQLSASSRS. The span at 760–769 shows a compositional bias: basic and acidic residues; the sequence is ESGRMKKSDN. Glycyl lysine isopeptide (Lys-Gly) (interchain with G-Cter in SUMO2) cross-links involve residues K770 and K833. Disordered stretches follow at residues 836–857 and 1059–1082; these read SGRAGVRPSSSGSAWEACSEAP and RKNSSTDQGSDEEGSLQKEQESAM. S1062 and S1068 each carry phosphoserine. Positions 1073–1082 are enriched in basic and acidic residues; sequence SLQKEQESAM. K1142 participates in a covalent cross-link: Glycyl lysine isopeptide (Lys-Gly) (interchain with G-Cter in SUMO2). Residues 1202–1241 are disordered; it reads SLDRNRRVRGGKSQKRKRLKKDPGKKIKRKKKGEFPGEKS. Residues 1207–1221 are compositionally biased toward basic residues; the sequence is RRVRGGKSQKRKRLK. S1253 and S1611 each carry phosphoserine. The interval 1608 to 1631 is disordered; that stretch reads KDGSLEDDEDEEDDLDEGVGGKRR. Over residues 1612-1624 the composition is skewed to acidic residues; sequence LEDDEDEEDDLDE. S1632 and S1653 each carry phosphoserine. Residues 1823-1833 are compositionally biased toward basic and acidic residues; it reads EDADIQREDPQ. Residues 1823–1961 are disordered; the sequence is EDADIQREDP…GSEDPRGFTE (139 aa). Residues 1838–1848 show a composition bias toward low complexity; sequence EGSSSEDSPPE. Phosphoserine is present on residues S1856, S1865, S1868, S1896, and S1911. A compositionally biased stretch (low complexity) spans 1916-1926; the sequence is LEDTAAAGAAQ. Residues 1937-1947 are compositionally biased toward polar residues; it reads SPGQEQLSGQA. S1969 carries the post-translational modification Phosphoserine.

The protein belongs to the TFIIIC subunit 1 family. As to quaternary structure, part of the TFIIIC subcomplex TFIIIC2, consisting of six subunits, GTF3C1, GTF3C2, GTF3C3, GTF3C4, GTF3C5 and GTF3C6. Interacts with IGHMBP2. Interacts with MAF1.

The protein localises to the nucleus. Functionally, required for RNA polymerase III-mediated transcription. Component of TFIIIC that initiates transcription complex assembly on tRNA and is required for transcription of 5S rRNA and other stable nuclear and cytoplasmic RNAs. Binds to the box B promoter element. This chain is General transcription factor 3C polypeptide 1 (GTF3C1), found in Homo sapiens (Human).